We begin with the raw amino-acid sequence, 90 residues long: [Leu8]-phyllolitorin (90 aa).

A signal peptide spans 1–30 (MSAVPFTRVLLISGFLAHLLLSTFVTLTVC). Residues 31–48 (KEVTEESDDLSKRNVLQR) constitute a propeptide that is removed on maturation. Q49 bears the Pyrrolidone carboxylic acid mark. At M57 the chain carries Methionine amide. Residues 61–90 (SLENTNRRSDEDMEISALFRGSPLKVKRSD) constitute a propeptide that is removed on maturation.

The protein belongs to the bombesin/neuromedin-B/ranatensin family. In terms of tissue distribution, expressed by the skin glands.

Its subcellular location is the secreted. The chain is [Leu8]-phyllolitorin from Phyllomedusa sauvagei (Sauvage's leaf frog).